The following is a 597-amino-acid chain: uncharacterized protein (597 aa).

Residues Met1–Arg23 show a composition bias toward basic and acidic residues. Disordered stretches follow at residues Met1 to Val32 and Arg171 to Pro192. The segment covering Glu175–Pro186 has biased composition (low complexity). A phosphoserine mark is found at Ser237 and Ser241. Disordered regions lie at residues Ser302–Asp335 and Glu549–Lys569. Positions Ala557–Ser568 are enriched in polar residues.

This is an uncharacterized protein from Rattus norvegicus (Rat).